The sequence spans 334 residues: Ornithine carbamoyltransferase (334 aa).

Residues 57–60, Gln-84, Arg-108, and 135–138 contribute to the carbamoyl phosphate site; these read STRT and HPTQ. Residues Asn-168, Asp-233, and 237–238 contribute to the L-ornithine site; that span reads SM. Carbamoyl phosphate contacts are provided by residues 275–276 and Arg-320; that span reads CL.

This sequence belongs to the aspartate/ornithine carbamoyltransferase superfamily. OTCase family.

It localises to the cytoplasm. The enzyme catalyses carbamoyl phosphate + L-ornithine = L-citrulline + phosphate + H(+). The protein operates within amino-acid biosynthesis; L-arginine biosynthesis; L-arginine from L-ornithine and carbamoyl phosphate: step 1/3. Its function is as follows. Reversibly catalyzes the transfer of the carbamoyl group from carbamoyl phosphate (CP) to the N(epsilon) atom of ornithine (ORN) to produce L-citrulline. The sequence is that of Ornithine carbamoyltransferase from Thermobifida fusca (strain YX).